The primary structure comprises 320 residues: GRAM domain-containing protein 2A (320 aa).

The tract at residues 33-56 (TEKPGKVQEPPDDGSLHWSEGSKG) is disordered. The GRAM domain occupies 74-141 (QQYHKLFKDI…VSVQLIKKHK (68 aa)). A helical membrane pass occupies residues 278-298 (LLKVIFVMICFLVLSSSYLAF).

Post-translationally, phosphorylated.

Its subcellular location is the endoplasmic reticulum membrane. The protein resides in the cell membrane. Functionally, participates in the organization ofendoplasmic reticulum-plasma membrane contact sites (EPCS) with pleiotropic functions including STIM1 recruitment and calcium homeostasis. Constitutive tether that co-localize with ESYT2/3 tethers at endoplasmic reticulum-plasma membrane contact sites in a phosphatidylinositol lipid-dependent manner. Pre-marks the subset of phosphtidylinositol 4,5-biphosphate (PI(4,5)P2)-enriched EPCS destined for the store operated calcium entry pathway (SOCE). The sequence is that of GRAM domain-containing protein 2A from Mus musculus (Mouse).